Here is a 462-residue protein sequence, read N- to C-terminus: Na(+)/H(+) antiporter NhaA (462 aa).

11 consecutive transmembrane segments (helical) span residues 24–44 (ISGL…NLPL), 66–86 (LPIG…TVGL), 102–122 (AAAV…ILFL), 156–176 (GWAV…ALFA), 196–216 (LLAI…YWFI), 235–255 (PWIA…EAGI), 256–275 (HPTL…VMHG), 290–310 (PFSA…VHFE), 312–332 (MSPL…LVVG), 361–381 (MIPA…IASL), and 392–412 (ARFG…VLLS).

The protein belongs to the NhaA Na(+)/H(+) (TC 2.A.33) antiporter family.

The protein resides in the cell membrane. It carries out the reaction Na(+)(in) + 2 H(+)(out) = Na(+)(out) + 2 H(+)(in). In terms of biological role, na(+)/H(+) antiporter that extrudes sodium in exchange for external protons. The protein is Na(+)/H(+) antiporter NhaA of Bifidobacterium breve (strain NCIMB 8807 / UCC2003).